The primary structure comprises 248 residues: MSLFPSLPLLLLSVVAASYSETVTCEDAQKTCPAVIACSSPGINGFPGKDGRDGTKGEKGEPGQGLRGLQGPPGKLGPPGNPGPSGSPGPKGQKGDPGKSPDCDSSLAASERKALQTEMARIKKWLTFSLGKQVGNKFFLTNGEIMTFEKVKALCVKFQASVATPRDAAENRAIRNLIKEEAFLGITDEKTEGQFVDLTGNRLTYTNWNEGEPNNAGSDEDCVLLLKNGQWNDIPCSSSHLAVCEFPI.

The first 20 residues, 1–20 (MSLFPSLPLLLLSVVAASYS), serve as a signal peptide directing secretion. Residues 42–99 (GINGFPGKDGRDGTKGEKGEPGQGLRGLQGPPGKLGPPGNPGPSGSPGPKGQKGDPGK) form the Collagen-like domain. The tract at residues 43–111 (INGFPGKDGR…DCDSSLAASE (69 aa)) is disordered. P47 is modified (4-hydroxyproline). Residues 49 to 61 (KDGRDGTKGEKGE) are compositionally biased toward basic and acidic residues. 4-hydroxyproline occurs at positions 73, 79, 82, and 88. Over residues 75–87 (KLGPPGNPGPSGS) the composition is skewed to pro residues. Basic and acidic residues predominate over residues 93–102 (QKGDPGKSPD). Residues 112 to 130 (RKALQTEMARIKKWLTFSL) adopt a coiled-coil conformation. Residues 134–245 (VGNKFFLTNG…CSSSHLAVCE (112 aa)) form the C-type lectin domain. 2 cysteine pairs are disulfide-bonded: C155–C244 and C222–C236.

In terms of assembly, oligomeric complex of 3 or more homotrimers. Interacts with MASP1 and MASP2. Interacts with MEP1A and MEP1B and may inhibit their catalytic activity. In terms of processing, hydroxylation on proline residues within the sequence motif, GXPG, is most likely to be 4-hydroxy as this fits the requirement for 4-hydroxylation in vertebrates.

It is found in the secreted. Functionally, calcium-dependent lectin involved in innate immune defense. Binds mannose, fucose and N-acetylglucosamine on different microorganisms and activates the lectin complement pathway. Binds to late apoptotic cells, as well as to apoptotic blebs and to necrotic cells, but not to early apoptotic cells, facilitating their uptake by macrophages. The protein is Mannose-binding protein C (MBL2) of Pongo pygmaeus (Bornean orangutan).